Reading from the N-terminus, the 195-residue chain is HTH-type transcriptional regulator BetI (195 aa).

The HTH tetR-type domain maps to 8–68 (SIRRRQLIDA…ATMRDITSQL (61 aa)). Residues 31-50 (TIAQIARRAGVSTGIISHYF) constitute a DNA-binding region (H-T-H motif).

The protein operates within amine and polyamine biosynthesis; betaine biosynthesis via choline pathway [regulation]. Its function is as follows. Repressor involved in the biosynthesis of the osmoprotectant glycine betaine. It represses transcription of the choline transporter BetT and the genes of BetAB involved in the synthesis of glycine betaine. This chain is HTH-type transcriptional regulator BetI, found in Escherichia coli O127:H6 (strain E2348/69 / EPEC).